The sequence spans 257 residues: Large ribosomal subunit protein uL2 (257 aa).

A disordered region spans residues 207–226 (VEHPFGGGNHQHIGKPSTIR).

Belongs to the universal ribosomal protein uL2 family. In terms of assembly, component of the large ribosomal subunit.

It localises to the cytoplasm. Component of the large ribosomal subunit. The ribosome is a large ribonucleoprotein complex responsible for the synthesis of proteins in the cell. The polypeptide is Large ribosomal subunit protein uL2 (rpl8) (Ictalurus punctatus (Channel catfish)).